Consider the following 144-residue polypeptide: Large ribosomal subunit protein uL15 (144 aa).

The interval 1–57 (MKLNDLSPAPGSRREKHRPGRGIGSGLGKTGGRGHKGQSSRSGGTIAPGFEGGQQPL) is disordered. Residues 21–31 (RGIGSGLGKTG) show a composition bias toward gly residues.

The protein belongs to the universal ribosomal protein uL15 family. Part of the 50S ribosomal subunit.

Its function is as follows. Binds to the 23S rRNA. The polypeptide is Large ribosomal subunit protein uL15 (Pseudomonas savastanoi pv. phaseolicola (strain 1448A / Race 6) (Pseudomonas syringae pv. phaseolicola (strain 1448A / Race 6))).